A 102-amino-acid polypeptide reads, in one-letter code: RNA-binding protein Hfq (102 aa).

The Sm domain occupies 9 to 68 (DPFLNALRRERVPVSIYLVNGIKLQGQIESFDQFVILLKNTVSQMVYKHAISTVVPSRPV). A disordered region spans residues 63 to 102 (VPSRPVSHHSNNAGGGASNNYHHGSNAQGSTAQQDSEETE). A compositionally biased stretch (low complexity) spans 70-88 (HHSNNAGGGASNNYHHGSN).

This sequence belongs to the Hfq family. Homohexamer.

Its function is as follows. RNA chaperone that binds small regulatory RNA (sRNAs) and mRNAs to facilitate mRNA translational regulation in response to envelope stress, environmental stress and changes in metabolite concentrations. Also binds with high specificity to tRNAs. The sequence is that of RNA-binding protein Hfq from Salmonella agona (strain SL483).